We begin with the raw amino-acid sequence, 319 residues long: Coproporphyrin III ferrochelatase 2 (319 aa).

Fe-coproporphyrin III-binding positions include tyrosine 13, arginine 30, 46 to 47 (RY), serine 54, and tyrosine 125. Residues histidine 181 and glutamate 262 each coordinate Fe(2+).

It belongs to the ferrochelatase family.

Its subcellular location is the cytoplasm. It carries out the reaction Fe-coproporphyrin III + 2 H(+) = coproporphyrin III + Fe(2+). The protein operates within porphyrin-containing compound metabolism; protoheme biosynthesis. Functionally, involved in coproporphyrin-dependent heme b biosynthesis. Catalyzes the insertion of ferrous iron into coproporphyrin III to form Fe-coproporphyrin III. The polypeptide is Coproporphyrin III ferrochelatase 2 (Bacillus cereus (strain ZK / E33L)).